A 3387-amino-acid polypeptide reads, in one-letter code: Genome polyprotein (3387 aa).

Over 1–100 (MNQRKKVVRP…LNILNGRKRS (100 aa)) the chain is Cytoplasmic. A hydrophobic; homodimerization of capsid protein C region spans residues 36–71 (LFSGKGPLRMVLAFITFLRVLSIPPTAGILKRWGQL). Residues 100 to 113 (STITLLCLIPTVMA) constitute a propeptide, ER anchor for the capsid protein C, removed in mature form by serine protease NS3. A helical membrane pass occupies residues 101 to 117 (TITLLCLIPTVMAFSLS). Topologically, residues 118-237 (TRDGEPLMIV…GAWKHAQRVE (120 aa)) are extracellular. N-linked (GlcNAc...) asparagine; by host glycosylation occurs at Asn-182. A helical membrane pass occupies residues 238–258 (SWILRNPGFALLAGFMAYMIG). The Cytoplasmic segment spans residues 259–265 (QTGIQRT). Residues 266–279 (VFFVLMMLVAPSYG) traverse the membrane as a helical segment. The Extracellular segment spans residues 280–725 (MRCVGVGNRD…HQVFGSVYTT (446 aa)). 4 disulfides stabilise this stretch: Cys-282/Cys-309, Cys-339/Cys-400, Cys-353/Cys-384, and Cys-371/Cys-395. Asn-346 carries an N-linked (GlcNAc...) asparagine; by host glycan. Residues 377-390 (DRGWGNGCGLFGKG) are fusion peptide. Asn-432 is a glycosylation site (N-linked (GlcNAc...) asparagine; by host). 2 disulfide bridges follow: Cys-464/Cys-564 and Cys-581/Cys-612. A helical membrane pass occupies residues 726-746 (MFGGVSWMIRILIGFLVLWIG). The Cytoplasmic portion of the chain corresponds to 747–751 (TNSRN). A helical transmembrane segment spans residues 752–772 (TSMAMTCIAVGGITLFLGFTV). At 773–1194 (QADMGCVASW…MLGDTMSGRI (422 aa)) the chain is on the extracellular side. Disulfide bonds link Cys-778-Cys-789, Cys-829-Cys-917, Cys-953-Cys-997, Cys-1054-Cys-1103, Cys-1065-Cys-1087, and Cys-1086-Cys-1090. Asn-904 and Asn-981 each carry an N-linked (GlcNAc...) asparagine; by host glycan. The helical transmembrane segment at 1195 to 1218 (GGQIHLAIMAVFKMSPGYVLGVFL) threads the bilayer. Topologically, residues 1219-1224 (RKLTSR) are lumenal. A helical transmembrane segment spans residues 1225-1243 (ETALMVIGMAMTTVLSIPH). The Cytoplasmic portion of the chain corresponds to 1244–1267 (DLMELIDGISLGLILLKIVTQFDN). The chain crosses the membrane as a helical span at residues 1268–1288 (TQVGTLALSLTFIRSTMPLVM). A topological domain (lumenal) is located at residue Ala-1289. The chain crosses the membrane as a helical span at residues 1290-1308 (WRTIMAVLFVVTLIPLCRT). The Lumenal segment spans residues 1309–1316 (SCLQKQSH). A helical membrane pass occupies residues 1317 to 1337 (WVEITALILGAQALPVYLMTL). At 1338–1345 (MKGASRRS) the chain is on the cytoplasmic side. Residues 1346-1366 (WPLNEGIMAVGLVSLLGSALL) traverse the membrane as a helical segment. The Lumenal segment spans residues 1367-1369 (KND). Residues 1370 to 1390 (VPLAGPMVAGGLLLAAYVMSG) traverse the membrane as a helical segment. Topologically, residues 1391–1437 (SSADLSLEKAANVQWDEMADITGSSPIIEVKQDEDGSFSIRDVEETN) are cytoplasmic. The tract at residues 1397–1436 (LEKAANVQWDEMADITGSSPIIEVKQDEDGSFSIRDVEET) is interacts with and activates NS3 protease. The helical intramembrane region spans 1438–1458 (MITLLVKLALITVSGLYPLAI). Over 1459-2143 (PVTMTLWYMW…QHALNELPES (685 aa)) the chain is Cytoplasmic. The Peptidase S7 domain occupies 1475–1652 (SGALWDVPSP…ERIGEPDYEV (178 aa)). Active-site charge relay system; for serine protease NS3 activity residues include His-1525, Asp-1549, and Ser-1609. One can recognise a Helicase ATP-binding domain in the interval 1654 to 1810 (EDIFRKKRLT…QSNSPIEDIE (157 aa)). The segment at 1658 to 1661 (RKKR) is important for RNA-binding. An ATP-binding site is contributed by 1667-1674 (LHPGAGKT). The DEAH box motif lies at 1758-1761 (DEAH). Residues 1820–1987 (TGFDWITDYQ…IIPTLFGPER (168 aa)) form the Helicase C-terminal domain. Lys-1862 carries the N6-acetyllysine; by host modification. The helical transmembrane segment at 2144–2164 (LETLMLVALLGAMTAGIFLFF) threads the bilayer. At 2165–2169 (MQGKG) the chain is on the lumenal side. Positions 2170–2190 (IGKLSMGLITIAVASGLLWVA) form an intramembrane region, helical. Residue Glu-2191 is a topological domain, lumenal. Residues 2192–2212 (IQPQWIAASIILEFFLMVLLI) form a helical membrane-spanning segment. The Cytoplasmic portion of the chain corresponds to 2213-2225 (PEPEKQRTPQDNQ). The chain crosses the membrane as a helical span at residues 2226–2246 (LIYVILTILTIIGLIAANEMG). The Lumenal segment spans residues 2247 to 2270 (LIEKTKTDFGFYQVKTETTILDVD). The helical intramembrane region spans 2271–2291 (LRPASAWTLYAVATTILTPML). Over 2292–2301 (RHTIENTSAN) the chain is Lumenal. N-linked (GlcNAc...) asparagine; by host glycosylation is found at Asn-2297 and Asn-2301. The helical intramembrane region spans 2302-2322 (LSLAAIANQAAVLMGLGKGWP). The Lumenal portion of the chain corresponds to 2323 to 2343 (LHRMDLGVPLLAMGCYSQVNP). The helical transmembrane segment at 2344 to 2364 (TTLTASLVMLLVHYAIIGPGL) threads the bilayer. Over 2365-2409 (QAKATREAQKRTAAGIMKNPTVDGITVIDLEPISYDPKFEKQLGQ) the chain is Cytoplasmic. The chain crosses the membrane as a helical span at residues 2410–2430 (VMLLVLCAGQLLLMRTTWAFC). Topologically, residues 2431 to 2455 (EVLTLATGPILTLWEGNPGRFWNTT) are lumenal. N-linked (GlcNAc...) asparagine; by host glycosylation occurs at Asn-2453. The chain crosses the membrane as a helical span at residues 2456–2476 (IAVSTANIFRGSYLAGAGLAF). Over 2477 to 3387 (SLIKNAQTPR…SAPSESEGVL (911 aa)) the chain is Cytoplasmic. Positions 2489-2751 (TGTTGETLGE…DVDLGAGTRS (263 aa)) constitute an mRNA cap 0-1 NS5-type MT domain. Residue Ser-2543 coordinates S-adenosyl-L-methionine. Ser-2543 is subject to Phosphoserine. The active-site For 2'-O-MTase activity is the Lys-2548. The short motif at 2564–2567 (VVDL) is the SUMO-interacting motif element. Gly-2573, Trp-2574, Thr-2591, Lys-2592, Asp-2618, and Val-2619 together coordinate S-adenosyl-L-methionine. Asp-2633 functions as the For 2'-O-MTase activity in the catalytic mechanism. Ile-2634 is an S-adenosyl-L-methionine binding site. Residues Lys-2668 and Glu-2704 each act as for 2'-O-MTase activity in the active site. Residue Tyr-2706 coordinates S-adenosyl-L-methionine. Positions 2925, 2929, 2934, and 2937 each coordinate Zn(2+). The region spanning 3016 to 3166 (LMYADDTAGW…PLDERFGTSL (151 aa)) is the RdRp catalytic domain. Zn(2+)-binding residues include His-3200, Cys-3216, and Cys-3335.

This sequence in the N-terminal section; belongs to the class I-like SAM-binding methyltransferase superfamily. mRNA cap 0-1 NS5-type methyltransferase family. Homodimer. Interacts (via N-terminus) with host EXOC1 (via C-terminus); this interaction results in EXOC1 degradation through the proteasome degradation pathway. As to quaternary structure, forms heterodimers with envelope protein E in the endoplasmic reticulum and Golgi. In terms of assembly, homodimer; in the endoplasmic reticulum and Golgi. Interacts with protein prM. Interacts with non-structural protein 1. Homodimer; Homohexamer when secreted. Interacts with envelope protein E. As to quaternary structure, interacts (via N-terminus) with serine protease NS3. In terms of assembly, forms a heterodimer with serine protease NS3. May form homooligomers. Forms a heterodimer with NS2B. Interacts with NS4B. Interacts with unphosphorylated RNA-directed RNA polymerase NS5; this interaction stimulates RNA-directed RNA polymerase NS5 guanylyltransferase activity. Interacts with host SHFL. As to quaternary structure, interacts with host MAVS; this interaction inhibits the synthesis of IFN-beta. Interacts with host SHFL. Interacts with host AUP1; the interaction occurs in the presence of Dengue virus NS4B and induces lipophagy which facilitates production of virus progeny particles. In terms of assembly, interacts with serine protease NS3. Homodimer. Interacts with host STAT2; this interaction inhibits the phosphorylation of the latter, and, when all viral proteins are present (polyprotein), targets STAT2 for degradation. Interacts with serine protease NS3. Interacts with host PAF1 complex; the interaction may prevent the recruitment of the PAF1 complex to interferon-responsive genes, and thus reduces the immune response. In terms of processing, specific enzymatic cleavages in vivo yield mature proteins. Cleavages in the lumen of endoplasmic reticulum are performed by host signal peptidase, whereas cleavages in the cytoplasmic side are performed by serine protease NS3. Signal cleavage at the 2K-4B site requires a prior NS3 protease-mediated cleavage at the 4A-2K site. Cleaved in post-Golgi vesicles by a host furin, releasing the mature small envelope protein M, and peptide pr. This cleavage is incomplete as up to 30% of viral particles still carry uncleaved prM. Post-translationally, N-glycosylated. In terms of processing, N-glycosylated. The excreted form is glycosylated and this is required for efficient secretion of the protein from infected cells. Acetylated by host KAT5. Acetylation modulates NS3 RNA-binding and unwinding activities and plays an important positive role for viral replication. Post-translationally, sumoylation of RNA-directed RNA polymerase NS5 increases NS5 protein stability allowing proper viral RNA replication. In terms of processing, phosphorylated on serines residues. This phosphorylation may trigger NS5 nuclear localization.

Its subcellular location is the virion. It localises to the host nucleus. The protein resides in the host cytoplasm. It is found in the host perinuclear region. The protein localises to the secreted. Its subcellular location is the virion membrane. It localises to the host endoplasmic reticulum membrane. The protein resides in the host mitochondrion. The catalysed reaction is Selective hydrolysis of -Xaa-Xaa-|-Yaa- bonds in which each of the Xaa can be either Arg or Lys and Yaa can be either Ser or Ala.. It carries out the reaction RNA(n) + a ribonucleoside 5'-triphosphate = RNA(n+1) + diphosphate. The enzyme catalyses a ribonucleoside 5'-triphosphate + H2O = a ribonucleoside 5'-diphosphate + phosphate + H(+). It catalyses the reaction ATP + H2O = ADP + phosphate + H(+). The catalysed reaction is a 5'-end (5'-triphosphoguanosine)-ribonucleoside in mRNA + S-adenosyl-L-methionine = a 5'-end (N(7)-methyl 5'-triphosphoguanosine)-ribonucleoside in mRNA + S-adenosyl-L-homocysteine. It carries out the reaction a 5'-end (N(7)-methyl 5'-triphosphoguanosine)-ribonucleoside in mRNA + S-adenosyl-L-methionine = a 5'-end (N(7)-methyl 5'-triphosphoguanosine)-(2'-O-methyl-ribonucleoside) in mRNA + S-adenosyl-L-homocysteine + H(+). Its function is as follows. Plays a role in virus budding by binding to the cell membrane and gathering the viral RNA into a nucleocapsid that forms the core of a mature virus particle. During virus entry, may induce genome penetration into the host cytoplasm after hemifusion induced by the surface proteins. Can migrate to the cell nucleus where it modulates host functions. Overcomes the anti-viral effects of host EXOC1 by sequestering and degrading the latter through the proteasome degradation pathway. Functionally, regulates the ATPase activity of the NS3 helicase activity. NS4A allows NS3 helicase to conserve energy during unwinding. Plays a role in the inhibition of the host innate immune response. Interacts with host MAVS and thereby prevents the interaction between RIGI and MAVS. In turn, IFN-beta production is impaired. Interacts with host AUP1 which mediates induction of lipophagy in host cells and facilitates production of virus progeny particles. Inhibits RNA silencing by interfering with host Dicer. In terms of biological role, prevents premature fusion activity of envelope proteins in trans-Golgi by binding to envelope protein E at pH6.0. After virion release in extracellular space, gets dissociated from E dimers. Its function is as follows. Acts as a chaperone for envelope protein E during intracellular virion assembly by masking and inactivating envelope protein E fusion peptide. prM is the only viral peptide matured by host furin in the trans-Golgi network probably to avoid catastrophic activation of the viral fusion activity in acidic Golgi compartment prior to virion release. prM-E cleavage is inefficient, and many virions are only partially matured. These uncleaved prM would play a role in immune evasion. Functionally, may play a role in virus budding. Exerts cytotoxic effects by activating a mitochondrial apoptotic pathway through M ectodomain. May display a viroporin activity. Binds to host cell surface receptor and mediates fusion between viral and cellular membranes. Envelope protein is synthesized in the endoplasmic reticulum in the form of heterodimer with protein prM. They play a role in virion budding in the ER, and the newly formed immature particle is covered with 60 spikes composed of heterodimer between precursor prM and envelope protein E. The virion is transported to the Golgi apparatus where the low pH causes dissociation of PrM-E heterodimers and formation of E homodimers. prM-E cleavage is inefficient, and many virions are only partially matured. These uncleaved prM would play a role in immune evasion. In terms of biological role, involved in immune evasion, pathogenesis and viral replication. Once cleaved off the polyprotein, is targeted to three destinations: the viral replication cycle, the plasma membrane and the extracellular compartment. Essential for viral replication. Required for formation of the replication complex and recruitment of other non-structural proteins to the ER-derived membrane structures. Excreted as a hexameric lipoparticle that plays a role against host immune response. Antagonizing the complement function. Binds to the host macrophages and dendritic cells. Inhibits signal transduction originating from Toll-like receptor 3 (TLR3). Its function is as follows. Disrupts the host endothelial glycocalyx layer of host pulmonary microvascular endothelial cells, inducing degradation of sialic acid and shedding of heparan sulfate proteoglycans. NS1 induces expression of sialidases, heparanase, and activates cathepsin L, which activates heparanase via enzymatic cleavage. These effects are probably linked to the endothelial hyperpermeability observed in severe dengue disease. Functionally, component of the viral RNA replication complex that functions in virion assembly and antagonizes the host immune response. Required cofactor for the serine protease function of NS3. May have membrane-destabilizing activity and form viroporins. In terms of biological role, displays three enzymatic activities: serine protease, NTPase and RNA helicase. NS3 serine protease, in association with NS2B, performs its autocleavage and cleaves the polyprotein at dibasic sites in the cytoplasm: C-prM, NS2A-NS2B, NS2B-NS3, NS3-NS4A, NS4A-2K and NS4B-NS5. NS3 RNA helicase binds RNA and unwinds dsRNA in the 3' to 5' direction. Its function is as follows. Functions as a signal peptide for NS4B and is required for the interferon antagonism activity of the latter. Functionally, induces the formation of ER-derived membrane vesicles where the viral replication takes place. Inhibits interferon (IFN)-induced host STAT1 phosphorylation and nuclear translocation, thereby preventing the establishment of cellular antiviral state by blocking the IFN-alpha/beta pathway. Replicates the viral (+) and (-) RNA genome, and performs the capping of genomes in the cytoplasm. NS5 methylates viral RNA cap at guanine N-7 and ribose 2'-O positions. Besides its role in RNA genome replication, also prevents the establishment of cellular antiviral state by blocking the interferon-alpha/beta (IFN-alpha/beta) signaling pathway. Inhibits host TYK2 and STAT2 phosphorylation, thereby preventing activation of JAK-STAT signaling pathway. May reduce immune responses by preventing the recruitment of the host PAF1 complex to interferon-responsive genes. The protein is Genome polyprotein of Dengue virus type 4 (strain Dominica/814669/1981) (DENV-4).